Consider the following 735-residue polypeptide: Polycomb protein sop-2 (735 aa).

Positions 1–15 (MSSNLTSNEMSSTSA) are enriched in polar residues. Disordered stretches follow at residues 1–59 (MSSN…SSSS), 223–288 (AARS…APAA), and 300–534 (PQES…PVLQ). Residues 224 to 503 (ARSSRMAARR…APATPATPAS (280 aa)) form an RNA-binding region. The span at 239–288 (YRGAFRGAARGAPSRRPAPAAEVAPETPVAAPMAPAAPAAPATPEAAPAA) shows a compositional bias: low complexity. Basic and acidic residues-rich tracts occupy residues 317–355 (DTSK…DGGR) and 389–398 (RAAEKKKPED). Positions 399–413 (SDAAEEQEVEMEVDN) are enriched in acidic residues. Positions 450-470 (VEPKKEPVDEPAEKIPKRSEA) are enriched in basic and acidic residues. The segment covering 471–504 (APEVPATATTKEAPPSTSSSPPDAPATPATPASS) has biased composition (low complexity). Over residues 520-534 (LTGSPPESETPPVLQ) the composition is skewed to polar residues. The SAM-like stretch occupies residues 621–712 (LVENNHEATL…YGTEVLNHYR (92 aa)).

In terms of assembly, homodimer. Interacts with ubc-9. Binds through its N-terminal region to the N-terminal region of sor-1. Post-translationally, sumoylated by ubc-9. Sumoylation is required for the transcriptional regulation of homeotic genes. As to expression, widely expressed. Weakly expressed in most somatic cells of 50-cell stage embryos. At 200 cell stage, it is strongly expressed. By comma stage, it is expressed in most somatic cells.

It is found in the nucleus. In terms of biological role, polycomb group (PcG) protein. PcG proteins act by forming multiprotein complexes, which are required to maintain the transcriptionally repressive state of homeotic genes throughout development. PcG proteins are not required to initiate repression, but to maintain it during later stages of development. Also required to repress expression of other genes and for localization of sor-1. Binds RNA. This chain is Polycomb protein sop-2 (sop-2), found in Caenorhabditis elegans.